The chain runs to 187 residues: Large ribosomal subunit protein uL6 (187 aa).

The protein belongs to the universal ribosomal protein uL6 family. In terms of assembly, part of the 50S ribosomal subunit.

Functionally, this protein binds to the 23S rRNA, and is important in its secondary structure. It is located near the subunit interface in the base of the L7/L12 stalk, and near the tRNA binding site of the peptidyltransferase center. The sequence is that of Large ribosomal subunit protein uL6 from Roseiflexus castenholzii (strain DSM 13941 / HLO8).